Reading from the N-terminus, the 380-residue chain is Chaperone protein DnaJ (380 aa).

Residues 5–70 form the J domain; that stretch reads DYYEILGVTK…QKRAAYDRFG (66 aa). The segment at 137-215 adopts a CR-type zinc-finger fold; the sequence is GKAETIKIPT…CQGAGRVNRE (79 aa). Zn(2+) contacts are provided by Cys150, Cys153, Cys167, Cys170, Cys189, Cys192, Cys203, and Cys206. CXXCXGXG motif repeat units follow at residues 150–157, 167–174, 189–196, and 203–210; these read CEVCDGSG, CPTCAGYG, CPNCHGRG, and CTACQGAG.

The protein belongs to the DnaJ family. As to quaternary structure, homodimer. Requires Zn(2+) as cofactor.

The protein localises to the cytoplasm. In terms of biological role, participates actively in the response to hyperosmotic and heat shock by preventing the aggregation of stress-denatured proteins and by disaggregating proteins, also in an autonomous, DnaK-independent fashion. Unfolded proteins bind initially to DnaJ; upon interaction with the DnaJ-bound protein, DnaK hydrolyzes its bound ATP, resulting in the formation of a stable complex. GrpE releases ADP from DnaK; ATP binding to DnaK triggers the release of the substrate protein, thus completing the reaction cycle. Several rounds of ATP-dependent interactions between DnaJ, DnaK and GrpE are required for fully efficient folding. Also involved, together with DnaK and GrpE, in the DNA replication of plasmids through activation of initiation proteins. The polypeptide is Chaperone protein DnaJ (Methylobacterium radiotolerans (strain ATCC 27329 / DSM 1819 / JCM 2831 / NBRC 15690 / NCIMB 10815 / 0-1)).